Consider the following 256-residue polypeptide: 5-oxoprolinase subunit A (256 aa).

It belongs to the LamB/PxpA family. In terms of assembly, forms a complex composed of PxpA, PxpB and PxpC.

The catalysed reaction is 5-oxo-L-proline + ATP + 2 H2O = L-glutamate + ADP + phosphate + H(+). In terms of biological role, catalyzes the cleavage of 5-oxoproline to form L-glutamate coupled to the hydrolysis of ATP to ADP and inorganic phosphate. This Geobacillus kaustophilus (strain HTA426) protein is 5-oxoprolinase subunit A.